The following is a 56-amino-acid chain: PI-stichotoxin-Hcr2f (56 aa).

The 51-residue stretch at 4–54 folds into the BPTI/Kunitz inhibitor domain; it reads CSEPKVVGPCKAGLRRFYYDSETGECKPFIYGGCKGNKNNFETLHACRGIC. 3 disulfides stabilise this stretch: Cys4–Cys54, Cys13–Cys37, and Cys29–Cys50.

It belongs to the venom Kunitz-type family. Sea anemone type 2 potassium channel toxin subfamily. In terms of processing, contains 3 disulfide bonds.

The protein resides in the secreted. It localises to the nematocyst. Functionally, dual-function toxin that inhibits both serine proteases and voltage-gated potassium channels. Has potent activity on both trypsin (Ki=28 nM) and chymotrypsin (Kd=1.8 nM). Shows inhibitory activity against 4 of the 7 potassium channels tested (rKv1.1/KCNA1; IC(50)=142.6 nM, hKv1.3/KCNA3; IC(50)=40.7 nM, rKv1.6/KCNA6; IC(50)=154.9 nM and drosophila Shaker; IC(50)=433.1 nM). Has an anti-inflammatory effect in LPS-activated macrophages in vitro, specifically reducing release of TNF and IL6 but not nitric oxide and reducing expression of IL1B precursor. In contrast to some paralogs, this protein decreases reactive oxygen species (ROS) level in the oxidative stress agent 6-hydroxydopamine (6-OHDA)-induced neurotoxicity model, but does not show cytoprotective activity on neuroblastoma cells. This protein also shows a weak free-radical scavenging activity. In vivo, when tested in a mice model of acute local inflammation, it reduces paw edema during 24 hours. In addition, it also reduces the synthesis of TNF in this model. The polypeptide is PI-stichotoxin-Hcr2f (Radianthus crispa (Leathery sea anemone)).